Reading from the N-terminus, the 154-residue chain is ORF3b protein (154 aa).

The mitochondrial targeting signal stretch occupies residues 80-138 (LQTLVLKMLHSSSLTSLLKTHRMCKYTQSTALQELLIQQWIQFMMSRRRLLACLCKHKK). The tract at residues 134-154 (CKHKKVSTNLCTHSFRKKQVR) is nucleolar targeting. The short motif at 135-153 (KHKKVSTNLCTHSFRKKQV) is the Bipartite nuclear localization signal element.

In terms of assembly, interacts with host RUNX1 isoform b.

It is found in the host nucleus. It localises to the host nucleolus. The protein localises to the host mitochondrion. Its function is as follows. Induces host cell G0/G1 arrest and apoptosis. The polypeptide is ORF3b protein (Homo sapiens (Human)).